We begin with the raw amino-acid sequence, 158 residues long: Protein-export protein SecB (158 aa).

This sequence belongs to the SecB family. Homotetramer, a dimer of dimers. One homotetramer interacts with 1 SecA dimer.

The protein localises to the cytoplasm. One of the proteins required for the normal export of preproteins out of the cell cytoplasm. It is a molecular chaperone that binds to a subset of precursor proteins, maintaining them in a translocation-competent state. It also specifically binds to its receptor SecA. The sequence is that of Protein-export protein SecB from Anaplasma phagocytophilum (strain HZ).